A 752-amino-acid chain; its full sequence is Putative xanthine dehydrogenase molybdenum-binding subunit XdhA (752 aa).

Positions 206, 237, 350, and 516 each coordinate Mo-molybdopterin.

The protein belongs to the xanthine dehydrogenase family. In terms of assembly, heterotrimer of XdhA, XdhB and XdhC. The cofactor is Mo-molybdopterin.

It catalyses the reaction xanthine + NAD(+) + H2O = urate + NADH + H(+). It carries out the reaction hypoxanthine + NAD(+) + H2O = xanthine + NADH + H(+). It participates in purine metabolism; hypoxanthine degradation; urate from hypoxanthine: step 1/2. It functions in the pathway purine metabolism; hypoxanthine degradation; urate from hypoxanthine: step 2/2. In terms of biological role, presumed to be a dehydrogenase, but possibly an oxidase. Participates in limited purine salvage (requires aspartate) but does not support aerobic growth on purines as the sole carbon source (purine catabolism). Deletion results in increased adenine sensitivity, suggesting that this protein contributes to the conversion of adenine to guanine nucleotides during purine salvage. The sequence is that of Putative xanthine dehydrogenase molybdenum-binding subunit XdhA (xdhA) from Escherichia coli (strain K12).